The primary structure comprises 972 residues: 116 kDa U5 small nuclear ribonucleoprotein component (972 aa).

An N-acetylmethionine modification is found at M1. A disordered region spans residues 1 to 54; the sequence is MDTDLYDEFGNYIGPELDSDEDDDELGRETKDLDEMDDDDDDDDIGDHDDDHPG. 2 stretches are compositionally biased toward acidic residues: residues 17–26 and 34–48; these read LDSDEDDDEL and DEMD…IGDH. S19 bears the Phosphoserine mark. Residue K64 forms a Glycyl lysine isopeptide (Lys-Gly) (interchain with G-Cter in SUMO1); alternate linkage. A Glycyl lysine isopeptide (Lys-Gly) (interchain with G-Cter in SUMO2); alternate cross-link involves residue K64. T86 is modified (phosphothreonine). A tr-type G domain is found at 127–409; the sequence is ELIRNVTLCG…GIHLTKEELK (283 aa). GTP is bound by residues 136-143, 204-208, and 258-261; these read GHLHHGKT, DTPGH, and NKID.

The protein belongs to the TRAFAC class translation factor GTPase superfamily. Classic translation factor GTPase family. EF-G/EF-2 subfamily. As to quaternary structure, component of the U5 snRNP and the U4/U6-U5 tri-snRNP complex, a building block of the spliceosome. The U4/U6-U5 tri-snRNP complex is composed of the U4, U6 and U5 snRNAs and at least PRPF3, PRPF4, PRPF6, PRPF8, PRPF31, SNRNP200, TXNL4A, SNRNP40, DDX23, CD2BP2, PPIH, SNU13, EFTUD2, SART1 and USP39. Component of the pre-catalytic, catalytic and post-catalytic spliceosome complexes. Component of the minor spliceosome, which splices U12-type introns. Within this complex, interacts with CRIPT. Interacts with ERBB4 and PRPF8. Interacts with PIH1D1. Interacts with RPAP3 and URI1 in a ZNHIT2-dependent manner. Interacts with NRDE2. Interacts with FAM50A. Interacts with UBL5.

The protein resides in the nucleus. In terms of biological role, required for pre-mRNA splicing as component of the spliceosome, including pre-catalytic, catalytic and post-catalytic spliceosomal complexes. Component of the U5 snRNP and the U4/U6-U5 tri-snRNP complex, a building block of the spliceosome. As a component of the minor spliceosome, involved in the splicing of U12-type introns in pre-mRNAs. In Pongo abelii (Sumatran orangutan), this protein is 116 kDa U5 small nuclear ribonucleoprotein component (EFTUD2).